The sequence spans 237 residues: Golgi to ER traffic protein 1 (237 aa).

Residues 1–4 are Lumenal-facing; it reads MDSG. The chain crosses the membrane as a helical span at residues 5–24; it reads GWIVYCCIFFILLGKVLEYT. The Cytoplasmic segment spans residues 25–110; the sequence is SSYQDKWFTK…SSKKVFGRVK (86 aa). Residues 40 to 99 adopt a coiled-coil conformation; sequence EARKLNSQYHELLSERLRLQEENHSISAQDNYARWTKNNRKLGELDKKLGTIRDKLQETN. Residues 111–131 traverse the membrane as a helical segment; it reads LIGLTIPFWILKIWQRSHVVY. Over 132 to 176 the chain is Lumenal; it reads HFPKQDLFPKLVTGVWARGWLYLALGPLQYLRNGSLNIQDYAPHG. Residues 177–193 form a helical membrane-spanning segment; that stretch reads VSLGIWIWALQATINTL. The Cytoplasmic portion of the chain corresponds to 194–237; sequence EFLVKQVILEKPVSPPPQKSKSATKAETKRPEKLEITDDKVELD. Residues 205 to 237 are disordered; it reads PVSPPPQKSKSATKAETKRPEKLEITDDKVELD. Basic and acidic residues predominate over residues 217–237; sequence TKAETKRPEKLEITDDKVELD.

The protein belongs to the WRB/GET1 family. In terms of assembly, component of the Golgi to ER traffic (GET) complex, which is composed of GET1, GET2 and GET3. Within the complex, GET1 and GET2 form a heterotetramer which is stabilized by phosphatidylinositol binding and which binds to the GET3 homodimer.

The protein localises to the endoplasmic reticulum membrane. The protein resides in the golgi apparatus membrane. Required for the post-translational delivery of tail-anchored (TA) proteins to the endoplasmic reticulum. Together with GET2, acts as a membrane receptor for soluble GET3, which recognizes and selectively binds the transmembrane domain of TA proteins in the cytosol. The GET complex cooperates with the HDEL receptor ERD2 to mediate the ATP-dependent retrieval of resident ER proteins that contain a C-terminal H-D-E-L retention signal from the Golgi to the ER. The sequence is that of Golgi to ER traffic protein 1 from Zygosaccharomyces rouxii (strain ATCC 2623 / CBS 732 / NBRC 1130 / NCYC 568 / NRRL Y-229).